A 140-amino-acid polypeptide reads, in one-letter code: Midkine (140 aa).

Positions 1-22 (MQHRGFFLLALLALLVVTSAVA) are cleaved as a signal peptide. Intrachain disulfides connect Cys34–Cys58, Cys42–Cys67, Cys49–Cys71, Cys81–Cys113, and Cys91–Cys123.

It belongs to the pleiotrophin family. As to quaternary structure, homodimer. Interacts with ALK. Interacts with LRP1; promotes neuronal survival. Interacts with LRP2. Interacts with NCAM1. Interacts (via C-terminal) with PTPRZ1 (via chondroitin sulfate chains); this interaction is inhibited by PTN; this interaction promotes neuronal migration. Interacts with NCL; this interaction promotes NCL clustering and lateral movements of this complex into lipid rafts leading to MDK internalization. Interacts with LRP6 and LRP8: this interaction is calcium dependent. Interacts with ITGA4. Interacts with ITGA6. Interacts with ITGB1. Interacts with ITGA4:ITGB1 complex; this interaction mediates MDK-induced osteoblast cells migration through PXN phosphorylation. Interacts with ITGA6:ITGB1 complex; this interaction mediates MDK-induced neurite outgrowth. Interacts with NOTCH2; this interactio mediates a nuclear accumulation of NOTCH2 and therefore activation of NOTCH2 signaling leading to interaction between HES1 and STAT3. Interacts with GPC2 (via heparan sulfate chain); this interaction is inhibited by heparin followed by chondroitin sulfate E; this interaction induces GPC2 clustering through heparan sulfate chain; this interaction induces neuronal cell adhesion and neurite outgrowth. Interacts with SDC3; this interaction induces SDC3 clustering; this interaction induces neuronal cell adhesion and neurite outgrowth. Interacts with SDC1. Interacts with CSPG5; this interaction promotes elongation of oligodendroglial precursor-like cells. Expressed in the follicular epithelium and granulosa cells of the ovary.

It is found in the secreted. In terms of biological role, secreted protein that functions as a cytokine and growth factor and mediates its signal through cell-surface proteoglycan and non-proteoglycan receptors. Binds cell-surface proteoglycan receptors via their chondroitin sulfate (CS) groups. Thereby regulates many processes like inflammatory response, cell proliferation, cell adhesion, cell growth, cell survival, tissue regeneration, cell differentiation and cell migration. Participates in inflammatory processes by exerting two different activities. Firstly, mediates neutrophils and macrophages recruitment to the sites of inflammation both by direct action by cooperating namely with ITGB2 via LRP1 and by inducing chemokine expression. This inflammation can be accompanied by epithelial cell survival and smooth muscle cell migration after renal and vessel damage, respectively. Secondly, suppresses the development of tolerogenic dendric cells thereby inhibiting the differentiation of regulatory T cells and also promote T cell expansion through NFAT signaling and Th1 cell differentiation. Promotes tissue regeneration after injury or trauma. After heart damage negatively regulates the recruitment of inflammatory cells and mediates cell survival through activation of anti-apoptotic signaling pathways via MAPKs and AKT pathways through the activation of angiogenesis. Also facilitates liver regeneration as well as bone repair by recruiting macrophage at trauma site and by promoting cartilage development by facilitating chondrocyte differentiation. Plays a role in brain by promoting neural precursor cells survival and growth through interaction with heparan sulfate proteoglycans. Binds PTPRZ1 and promotes neuronal migration and embryonic neurons survival. Binds SDC3 or GPC2 and mediates neurite outgrowth and cell adhesion. Binds chondroitin sulfate E and heparin leading to inhibition of neuronal cell adhesion induced by binding with GPC2. Binds CSPG5 and promotes elongation of oligodendroglial precursor-like cells. Also binds ITGA6:ITGB1 complex; this interaction mediates MDK-induced neurite outgrowth. Binds LRP1; promotes neuronal survival. Binds ITGA4:ITGB1 complex; this interaction mediates MDK-induced osteoblast cells migration through PXN phosphorylation. Binds anaplastic lymphoma kinase (ALK) which induces ALK activation and subsequent phosphorylation of the insulin receptor substrate (IRS1), followed by the activation of mitogen-activated protein kinase (MAPK) and PI3-kinase, and the induction of cell proliferation. Promotes epithelial to mesenchymal transition through interaction with NOTCH2. During arteriogenesis, plays a role in vascular endothelial cell proliferation by inducing VEGFA expression and release which in turn induces nitric oxide synthase expression. Moreover activates vasodilation through nitric oxide synthase activation. Negatively regulates bone formation in response to mechanical load by inhibiting Wnt/beta-catenin signaling in osteoblasts. In addition plays a role in hippocampal development, working memory, auditory response, early fetal adrenal gland development and the female reproductive system. The chain is Midkine from Mus musculus (Mouse).